The chain runs to 893 residues: Sulfate permease 2 (893 aa).

The interval 1–25 (MSREGYPNFEEVEIPDFQETNNTVP) is disordered. Topologically, residues 1-131 (MSREGYPNFE…VFPIINWLPH (131 aa)) are cytoplasmic. A helical transmembrane segment spans residues 132–152 (YNFSWFTADLIAGITIGCVLV). Topologically, residues 153–163 (PQSMSYAQVAT) are extracellular. Residues 164-184 (LPAQYGLYSSFIGAYSYSFFA) form a helical membrane-spanning segment. Over 185–188 (TSKD) the chain is Cytoplasmic. Residues 189-209 (VCIGPVAVMSLQTAKVIADVT) traverse the membrane as a helical segment. Residues 210 to 221 (AKYPDGDSAITG) are Extracellular-facing. The chain crosses the membrane as a helical span at residues 222-242 (PVIATTLALLCGIISAAVGFL). At 243-244 (RL) the chain is on the cytoplasmic side. A helical membrane pass occupies residues 245–265 (GFLVELISLNAVAGFMTGSAF). Residues 266–305 (NILWGQVPALMGYNSLVNTRAATYKVVIETLKHLPDTKLD) are Extracellular-facing. The chain crosses the membrane as a helical span at residues 306-326 (AVFGLIPLFLLYVWKWWCGTY). At 327–350 (GPRLNDRYNSKNPRLHKIIKWTYF) the chain is on the cytoplasmic side. The chain crosses the membrane as a helical span at residues 351-371 (YAQASRNGIIIIVFTCIGWAI). At 372–399 (TRGKSKSERPISILGSVPSGLKEVGVFH) the chain is on the extracellular side. A helical membrane pass occupies residues 400-420 (VPPGLMSKLGPNLPASIIVLL). Residues 421-443 (LEHIAISKSFGRINDYKVVPDQE) lie on the Cytoplasmic side of the membrane. A helical transmembrane segment spans residues 444–464 (LIAIGVSNLLGTFFNAYPATG). Topologically, residues 465-483 (SFSRSALKAKCNVRTPLSG) are extracellular. A helical membrane pass occupies residues 484–504 (LFSGSCVLLALYCLTGAFFYI). Residues 505–532 (PKATLSAVIIHAVSDLLASYQTTWNFWK) are Cytoplasmic-facing. Residues 533–551 (MNPLDFICFIVTVLITVFA) form a helical membrane-spanning segment. The Extracellular segment spans residues 552-559 (SIEDGIYF). The helical transmembrane segment at 560-580 (AMCWSCAMLILKVAFPAGKFL) threads the bilayer. Residues 581 to 893 (GRVEVAEVTD…DIPDFAKWDI (313 aa)) lie on the Cytoplasmic side of the membrane. The STAS domain occupies 676 to 854 (DVQILPPPDG…SIVAGHTSYH (179 aa)).

This sequence belongs to the SLC26A/SulP transporter (TC 2.A.53) family.

It localises to the membrane. Functionally, high affinity uptake of sulfate into the cell. In Saccharomyces cerevisiae (strain ATCC 204508 / S288c) (Baker's yeast), this protein is Sulfate permease 2 (SUL2).